The primary structure comprises 151 residues: Sec-independent protein translocase protein TatB (151 aa).

The chain crosses the membrane as a helical span at residues 1–21 (MFGMSLPEIIIIAVIAVIFLG). Positions 120-131 (NNDPLNNETLNE) are enriched in low complexity. Positions 120–151 (NNDPLNNETLNEQPSKPSPNLNLENKEIKKEA) are disordered. Over residues 132-142 (QPSKPSPNLNL) the composition is skewed to polar residues.

It belongs to the TatB family. In terms of assembly, the Tat system comprises two distinct complexes: a TatABC complex, containing multiple copies of TatA, TatB and TatC subunits, and a separate TatA complex, containing only TatA subunits. Substrates initially bind to the TatABC complex, which probably triggers association of the separate TatA complex to form the active translocon.

The protein resides in the cell inner membrane. Its function is as follows. Part of the twin-arginine translocation (Tat) system that transports large folded proteins containing a characteristic twin-arginine motif in their signal peptide across membranes. Together with TatC, TatB is part of a receptor directly interacting with Tat signal peptides. TatB may form an oligomeric binding site that transiently accommodates folded Tat precursor proteins before their translocation. The sequence is that of Sec-independent protein translocase protein TatB from Campylobacter fetus subsp. fetus (strain 82-40).